The following is a 361-amino-acid chain: Probable U3 small nucleolar RNA-associated protein 11 (361 aa).

4 disordered regions span residues 1–52 (MTKG…KKRK), 200–235 (LMSG…TPET), 262–295 (KRES…TRLL), and 311–361 (RHVR…RRAR). Residues 17–33 (HLKRKTHLERSQPKSRQ) are compositionally biased toward basic residues. Basic and acidic residues-rich tracts occupy residues 37–46 (QLEKHKDHVL) and 217–228 (RREVQEKMRRSG). Residues 278–287 (DDGEQEEAAA) show a composition bias toward acidic residues. Basic and acidic residues predominate over residues 342 to 352 (RQMEQRRESRF).

Belongs to the UTP11 family. Component of the ribosomal small subunit (SSU) processome.

The protein resides in the nucleus. The protein localises to the nucleolus. Functionally, involved in nucleolar processing of pre-18S ribosomal RNA. The polypeptide is Probable U3 small nucleolar RNA-associated protein 11 (Leishmania major).